The primary structure comprises 155 residues: 6,7-dimethyl-8-ribityllumazine synthase (155 aa).

5-amino-6-(D-ribitylamino)uracil-binding positions include Phe23, 57–59 (AYE), and 81–83 (AVI). 86–87 (AT) lines the (2S)-2-hydroxy-3-oxobutyl phosphate pocket. His89 serves as the catalytic Proton donor. Phe114 is a 5-amino-6-(D-ribitylamino)uracil binding site. (2S)-2-hydroxy-3-oxobutyl phosphate is bound at residue Arg128.

This sequence belongs to the DMRL synthase family.

It catalyses the reaction (2S)-2-hydroxy-3-oxobutyl phosphate + 5-amino-6-(D-ribitylamino)uracil = 6,7-dimethyl-8-(1-D-ribityl)lumazine + phosphate + 2 H2O + H(+). It functions in the pathway cofactor biosynthesis; riboflavin biosynthesis; riboflavin from 2-hydroxy-3-oxobutyl phosphate and 5-amino-6-(D-ribitylamino)uracil: step 1/2. Catalyzes the formation of 6,7-dimethyl-8-ribityllumazine by condensation of 5-amino-6-(D-ribitylamino)uracil with 3,4-dihydroxy-2-butanone 4-phosphate. This is the penultimate step in the biosynthesis of riboflavin. The protein is 6,7-dimethyl-8-ribityllumazine synthase of Desulfotalea psychrophila (strain LSv54 / DSM 12343).